The chain runs to 208 residues: Small ribosomal subunit protein uS9c (208 aa).

Residues 1 to 51 constitute a chloroplast transit peptide; sequence MAVSISSLTSSFASLSFTSNLTPKPQTLPMARTKPFSLSNPAVVKPLVITA. Thr-52 bears the N-acetylthreonine mark. Residues 185–208 form a disordered region; sequence DSRIVERKKPGLKKARKAPQFSKR. Over residues 194–208 the composition is skewed to basic residues; it reads PGLKKARKAPQFSKR.

In terms of assembly, component of the chloroplast small ribosomal subunit (SSU). Mature 70S chloroplast ribosomes of higher plants consist of a small (30S) and a large (50S) subunit. The 30S small subunit contains 1 molecule of ribosomal RNA (16S rRNA) and 24 different proteins. The 50S large subunit contains 3 rRNA molecules (23S, 5S and 4.5S rRNA) and 33 different proteins. uS9c binds directly to 16S ribosomal RNA. uS9c interacts with translation factor pY (PSRP1).

It is found in the plastid. It localises to the chloroplast. In terms of biological role, component of the chloroplast ribosome (chloro-ribosome), a dedicated translation machinery responsible for the synthesis of chloroplast genome-encoded proteins, including proteins of the transcription and translation machinery and components of the photosynthetic apparatus. The protein is Small ribosomal subunit protein uS9c (PRPS9) of Spinacia oleracea (Spinach).